We begin with the raw amino-acid sequence, 96 residues long: Muconolactone Delta-isomerase (96 aa).

The protein belongs to the muconolactone Delta-isomerase family. Homodecamer.

The enzyme catalyses (S)-muconolactone = (4,5-dihydro-5-oxofuran-2-yl)-acetate. It functions in the pathway aromatic compound metabolism; beta-ketoadipate pathway; 5-oxo-4,5-dihydro-2-furylacetate from catechol: step 3/3. The protein is Muconolactone Delta-isomerase (catC) of Pseudomonas aeruginosa (strain ATCC 15692 / DSM 22644 / CIP 104116 / JCM 14847 / LMG 12228 / 1C / PRS 101 / PAO1).